The sequence spans 292 residues: MVALSVEVGPWTGCAVLFLRSCPAVNLLSLYKDQQGKFSVFKVLKLTLTDSAGGLEGYEILKLHDADPLLGVEVKFVDVAACRRFLQSYGSGAVQQSLSQHTCRLLHIPQQELALETQLKAGTHTLDFCLDDLELCLQHIHQSQPERLRDDEIAELDQQLQSQALGHIPQPPTLTQEEPPVPSNCFLFQKRVFEDRMLAAGDLQRFSNGVGRDWRKVGRALGKNCRALKGPAIDNLAYEYEREGLYEQAYQLLSRFIQAEGRAARLGRLVRALEDSKLTSLAENILDIQPRD.

Positions 148 to 164 (LRDDEIAELDQQLQSQA) match the Nuclear export signal motif. In terms of domain architecture, Death spans 199 to 289 (AAGDLQRFSN…SLAENILDIQ (91 aa)). The Nuclear localization signal motif lies at 215-228 (RKVGRALGKNCRAL).

Heterodimer with tnfrsf1a.

It is found in the nucleus. The protein localises to the cytoplasm. It localises to the cytoskeleton. In terms of biological role, adapter molecule for tnfrsf1a that specifically associates with the cytoplasmic domain of activated tnfrsf1a mediating its interaction with fadd. In Oncorhynchus mykiss (Rainbow trout), this protein is Tumor necrosis factor receptor type 1-associated DEATH domain protein (tradd).